Here is a 377-residue protein sequence, read N- to C-terminus: Deoxyribonuclease CdiA-o11 (377 aa).

The VENN CT cleavage motif signature appears at 81–84 (VENN). An inner membrane translocation domain (IMTD), targets to YciB region spans residues 85 to 233 (YLSTNQSLTF…ISFMSRNTAT (149 aa)). Residues 88–377 (TNQSLTFDKE…GVKVTVTQVK (290 aa)) form a CT domain, sufficient to interact with CdiI region. The segment at 222 to 377 (AAISFMSRNT…GVKVTVTQVK (156 aa)) is has DNase activity in vivo, cannot be expressed in the absence of CdiI. Active-site residues include glutamate 257, aspartate 278, serine 289, and lysine 291. Zn(2+) is bound by residues glutamate 257 and aspartate 278.

In terms of assembly, interacts with cognate immunity protein CdiI-o11-EC869, which blocks its toxic DNase activity. Requires Zn(2+) as cofactor.

The protein localises to the target cell. The protein resides in the target cell cytoplasm. Its function is as follows. Toxic component of a toxin-immunity protein module, which functions as a cellular contact-dependent growth inhibition (CDI) system. CDI modules allow bacteria to communicate with and inhibit the growth of closely related neighboring bacteria in a contact-dependent fashion. The C-terminal 289 residues (the CT fragment) has a strong DNase activity in the presence of Zn(2+), completely degrading supercoiled and linear plasmids, and inhibits growth. In the presence of Mg(2+) it nicks dsDNA. Toxic activity is neutralized by coexpression of the cognate immunity protein CdiI-o11-EC869, but not by non-cognate immunity proteins from other toxin-immunity modules or other strains of E.coli. Gains access to the cytoplasm of target cells by using integral inner membrane protein YciB. Expression of this locus confers protection against other bacteria carrying the locus. This is Deoxyribonuclease CdiA-o11 (cdiA4) from Escherichia coli O157:H7 (strain EC869).